A 324-amino-acid chain; its full sequence is Formimidoylglutamase (324 aa).

Mn(2+) contacts are provided by H124, D153, H155, D157, D245, and D247.

This sequence belongs to the arginase family. Mn(2+) is required as a cofactor.

It carries out the reaction N-formimidoyl-L-glutamate + H2O = formamide + L-glutamate. Its pathway is amino-acid degradation; L-histidine degradation into L-glutamate; L-glutamate from N-formimidoyl-L-glutamate (hydrolase route): step 1/1. Its function is as follows. Catalyzes the conversion of N-formimidoyl-L-glutamate to L-glutamate and formamide. This Hahella chejuensis (strain KCTC 2396) protein is Formimidoylglutamase.